We begin with the raw amino-acid sequence, 183 residues long: Putative 3-methyladenine DNA glycosylase (183 aa).

The protein belongs to the DNA glycosylase MPG family.

This Rickettsia africae (strain ESF-5) protein is Putative 3-methyladenine DNA glycosylase.